The sequence spans 269 residues: Formamidopyrimidine-DNA glycosylase (269 aa).

The active-site Schiff-base intermediate with DNA is P2. The active-site Proton donor is E3. K57 serves as the catalytic Proton donor; for beta-elimination activity. H90, R109, and K150 together coordinate DNA. Residues 235–269 (QVYGRAGEPCRQCGHPIEIAKHGQRSTFFCRHCQH) form an FPG-type zinc finger. R259 serves as the catalytic Proton donor; for delta-elimination activity.

It belongs to the FPG family. Monomer. It depends on Zn(2+) as a cofactor.

It catalyses the reaction Hydrolysis of DNA containing ring-opened 7-methylguanine residues, releasing 2,6-diamino-4-hydroxy-5-(N-methyl)formamidopyrimidine.. The catalysed reaction is 2'-deoxyribonucleotide-(2'-deoxyribose 5'-phosphate)-2'-deoxyribonucleotide-DNA = a 3'-end 2'-deoxyribonucleotide-(2,3-dehydro-2,3-deoxyribose 5'-phosphate)-DNA + a 5'-end 5'-phospho-2'-deoxyribonucleoside-DNA + H(+). Functionally, involved in base excision repair of DNA damaged by oxidation or by mutagenic agents. Acts as a DNA glycosylase that recognizes and removes damaged bases. Has a preference for oxidized purines, such as 7,8-dihydro-8-oxoguanine (8-oxoG). Has AP (apurinic/apyrimidinic) lyase activity and introduces nicks in the DNA strand. Cleaves the DNA backbone by beta-delta elimination to generate a single-strand break at the site of the removed base with both 3'- and 5'-phosphates. The chain is Formamidopyrimidine-DNA glycosylase from Yersinia pseudotuberculosis serotype O:1b (strain IP 31758).